The primary structure comprises 197 residues: Small ribosomal subunit protein uS4c (197 aa).

In terms of domain architecture, S4 RNA-binding spans 85–161 (MRLDNILFRL…TGKELANHLN (77 aa)).

This sequence belongs to the universal ribosomal protein uS4 family. As to quaternary structure, part of the 30S ribosomal subunit. Contacts protein S5. The interaction surface between S4 and S5 is involved in control of translational fidelity.

The protein localises to the plastid. Its function is as follows. One of the primary rRNA binding proteins, it binds directly to 16S rRNA where it nucleates assembly of the body of the 30S subunit. Functionally, with S5 and S12 plays an important role in translational accuracy. In Cuscuta obtusiflora (Peruvian dodder), this protein is Small ribosomal subunit protein uS4c (rps4).